The chain runs to 535 residues: Reticuline oxidase (535 aa).

Residues 1–23 form the signal peptide; the sequence is MMCRSLTLRFFLFIVLLQTCVRG. N-linked (GlcNAc...) asparagine glycosylation is present at asparagine 42. Positions 71-245 constitute an FAD-binding PCMH-type domain; that stretch reads TVSKPSFIVM…YAWKIKLLPV (175 aa). Positions 108–170 form a cross-link, 6-(S-cysteinyl)-8alpha-(pros-histidyl)-FAD (His-Cys); the sequence is HSYEGLSYTA…DTLGFTAGWC (63 aa). An N-linked (GlcNAc...) asparagine glycan is attached at asparagine 475.

Belongs to the oxygen-dependent FAD-linked oxidoreductase family. The cofactor is FAD. It depends on a metal cation as a cofactor. Post-translationally, the FAD cofactor is bound via a bicovalent 6-S-cysteinyl, 8alpha-N1-histidyl FAD linkage. As to expression, expressed in roots and stems. Not detected in leaves or reproductive organs. Restricted to the parietal region of sieve elements adjacent or proximal to laticifers.

It localises to the cytoplasmic vesicle. The catalysed reaction is (S)-reticuline + O2 = (S)-scoulerine + H2O2 + H(+). The protein operates within alkaloid biosynthesis; (S)-scoulerine biosynthesis; (S)-scoulerine from (S)-reticuline: step 1/1. Oxygen-dependent FAD-dependent oxidoreductase essential to the formation of benzophenanthridine alkaloids in the response of plants to pathogenic attack. Catalyzes the stereospecific conversion of the N-methyl moiety of (S)-reticuline into the berberine bridge carbon of (S)-scoulerine. Involved in the biosynthesis of sanguinarine. This Papaver somniferum (Opium poppy) protein is Reticuline oxidase (BBE1).